A 1763-amino-acid polypeptide reads, in one-letter code: Non-reducing polyketide synthase PKS19 (1763 aa).

The N-terminal acylcarrier protein transacylase domain (SAT) stretch occupies residues 20 to 261 (GDQRNLFRKL…PMKKVQGMWH (242 aa)). Residues 390–822 (SSKIAVVGMA…GGNTSIIIEE (433 aa)) enclose the Ketosynthase family 3 (KS3) domain. Residues C561, H696, and H740 each act as for beta-ketoacyl synthase activity in the active site. A malonyl-CoA:ACP transacylase (MAT) domain region spans residues 922-1227 (FAFTGQGTFY…QRDTDNWLTL (306 aa)). The N-terminal hotdog fold stretch occupies residues 1307 to 1439 (HRLISEQYTD…VFYEDPSSWL (133 aa)). The 303-residue stretch at 1307–1609 (HRLISEQYTD…FLQWPRVMLN (303 aa)) folds into the PKS/mFAS DH domain. Residues 1334–1588 (GVVDGHAMNG…FVGDVYVLQG (255 aa)) form a product template (PT) domain region. H1339 functions as the Proton acceptor; for dehydratase activity in the catalytic mechanism. Residues 1461–1609 (VTGKASKLTT…FLQWPRVMLN (149 aa)) form a C-terminal hotdog fold region. The active-site Proton donor; for dehydratase activity is the D1522. The tract at residues 1619–1690 (AKPAAKVPGK…MEELPSPPAG (72 aa)) is disordered. The span at 1635-1647 (PHFKPHHVSRHKP) shows a compositional bias: basic residues. The region spanning 1689–1763 (AGMNDDMEKA…TIQDLKALLR (75 aa)) is the Carrier domain. O-(pantetheine 4'-phosphoryl)serine is present on S1726.

Non-reducing polyketide synthase that mediates the biosynthesis of alternariol (AOH), a micotoxin that seems not to be involved in virulence and oxidative stress tolerance. PKS19 alone is sufficient for AOH synthesis which is initiated by priming with acetyl-CoA, followed by sequential condensations of 6 malonyl-CoA units. The protein is Non-reducing polyketide synthase PKS19 of Phaeosphaeria nodorum (strain SN15 / ATCC MYA-4574 / FGSC 10173) (Glume blotch fungus).